A 179-amino-acid chain; its full sequence is Large ribosomal subunit protein uL5 (179 aa).

Belongs to the universal ribosomal protein uL5 family. Part of the 50S ribosomal subunit; part of the 5S rRNA/L5/L18/L25 subcomplex. Contacts the 5S rRNA and the P site tRNA. Forms a bridge to the 30S subunit in the 70S ribosome.

In terms of biological role, this is one of the proteins that bind and probably mediate the attachment of the 5S RNA into the large ribosomal subunit, where it forms part of the central protuberance. In the 70S ribosome it contacts protein S13 of the 30S subunit (bridge B1b), connecting the 2 subunits; this bridge is implicated in subunit movement. Contacts the P site tRNA; the 5S rRNA and some of its associated proteins might help stabilize positioning of ribosome-bound tRNAs. In Alcanivorax borkumensis (strain ATCC 700651 / DSM 11573 / NCIMB 13689 / SK2), this protein is Large ribosomal subunit protein uL5.